Here is a 209-residue protein sequence, read N- to C-terminus: Holliday junction branch migration complex subunit RuvA (209 aa).

The segment at Met-1–Ala-64 is domain I. Residues Ser-65 to Gln-143 form a domain II region. The flexible linker stretch occupies residues Pro-144–Gln-157. Residues Ala-158 to Gly-209 form a domain III region.

This sequence belongs to the RuvA family. Homotetramer. Forms an RuvA(8)-RuvB(12)-Holliday junction (HJ) complex. HJ DNA is sandwiched between 2 RuvA tetramers; dsDNA enters through RuvA and exits via RuvB. An RuvB hexamer assembles on each DNA strand where it exits the tetramer. Each RuvB hexamer is contacted by two RuvA subunits (via domain III) on 2 adjacent RuvB subunits; this complex drives branch migration. In the full resolvosome a probable DNA-RuvA(4)-RuvB(12)-RuvC(2) complex forms which resolves the HJ.

It localises to the cytoplasm. In terms of biological role, the RuvA-RuvB-RuvC complex processes Holliday junction (HJ) DNA during genetic recombination and DNA repair, while the RuvA-RuvB complex plays an important role in the rescue of blocked DNA replication forks via replication fork reversal (RFR). RuvA specifically binds to HJ cruciform DNA, conferring on it an open structure. The RuvB hexamer acts as an ATP-dependent pump, pulling dsDNA into and through the RuvAB complex. HJ branch migration allows RuvC to scan DNA until it finds its consensus sequence, where it cleaves and resolves the cruciform DNA. This Marinobacter nauticus (strain ATCC 700491 / DSM 11845 / VT8) (Marinobacter aquaeolei) protein is Holliday junction branch migration complex subunit RuvA.